Consider the following 858-residue polypeptide: DNA mismatch repair protein MutS (858 aa).

602 to 609 (GPNMSGKS) contributes to the ATP binding site.

It belongs to the DNA mismatch repair MutS family.

This protein is involved in the repair of mismatches in DNA. It is possible that it carries out the mismatch recognition step. This protein has a weak ATPase activity. Overexpression of mutSL partially suppresses the high spontaneous mutation frequency of a ytkD/mutM/mutY triple disruption which lacks the system required to prevent damage by oxidized guanine (8-oxo-dGTP). This suggests that MutSL also functions to repair mismatches due to oxidative stress in both growing and stationary phase cells. This Bacillus subtilis (strain 168) protein is DNA mismatch repair protein MutS.